A 321-amino-acid polypeptide reads, in one-letter code: MRFKGLDLNLLVALDALMTERKLTAAARSINLSQPAMSAAITRLRTYFRDELFTMNGRELVPTPRAEALAPAVREALLHIHLSIISWDPFNPAQSDRSFRIILSDFMTLMFFERVVVRVAREAPAVSFELLPFSDEPDELLRRGDVDFLILPEMFMSHTHPRAKLFDERFVCVSCPTNQKLPPQLSIDNYVSMGHVAAQFGKQRPSVEEWLLREHGLRRRVEVAVPGFTMIPPFLSGTDRIATLPLRLAMHFAKAIPLRITELPQPIFPAFTEAVQWPAPHSSDPASLWMREIFLQEASRVEFQSETSAHALSSSQLPTCL.

An HTH lysR-type domain is found at 6–63; it reads LDLNLLVALDALMTERKLTAAARSINLSQPAMSAAITRLRTYFRDELFTMNGRELVPT. The segment at residues 23–42 is a DNA-binding region (H-T-H motif); it reads LTAAARSINLSQPAMSAAIT.

It belongs to the LysR transcriptional regulatory family.

Its function is as follows. NodD regulates the expression of the nodABCFE genes which encode other nodulation proteins. NodD is also a negative regulator of its own expression. Binds flavonoids as inducers. The chain is Nodulation protein D 1 (nodD1) from Bradyrhizobium japonicum.